The following is a 645-amino-acid chain: 1,4-alpha-glucan branching enzyme GlgB (645 aa).

D309 (nucleophile) is an active-site residue. Residue E352 is the Proton donor of the active site. The interval 619–645 (VKTRKGSKKQDGSKTKVRSNVTSRGKR) is disordered. Over residues 636 to 645 (RSNVTSRGKR) the composition is skewed to polar residues.

This sequence belongs to the glycosyl hydrolase 13 family. GlgB subfamily. As to quaternary structure, monomer.

The catalysed reaction is Transfers a segment of a (1-&gt;4)-alpha-D-glucan chain to a primary hydroxy group in a similar glucan chain.. Its pathway is glycan biosynthesis; glycogen biosynthesis. Its function is as follows. Catalyzes the formation of the alpha-1,6-glucosidic linkages in glycogen by scission of a 1,4-alpha-linked oligosaccharide from growing alpha-1,4-glucan chains and the subsequent attachment of the oligosaccharide to the alpha-1,6 position. The chain is 1,4-alpha-glucan branching enzyme GlgB from Bacillus cereus (strain G9842).